The following is a 39-amino-acid chain: Large ribosomal subunit protein bL36 (39 aa).

It belongs to the bacterial ribosomal protein bL36 family.

This chain is Large ribosomal subunit protein bL36, found in Lactiplantibacillus plantarum (strain ATCC BAA-793 / NCIMB 8826 / WCFS1) (Lactobacillus plantarum).